Reading from the N-terminus, the 313-residue chain is MNKLVFCLMGPTASGKTGLACELLTHFPFEIISVDSAMIYRDMNIGTAKPSIHELQRAPHYLIDIKDPVESYSAAQFCTDALSLCAEIIKRGNIPLLVGGTMMYFNALQKGLATLPEADEAVRKRLEEEALSQGWDFLYQKLSQLDPVTAARIHAHDTQRIQRALEVYYLTGSTLSTYLTGPHVQPDYYFVNLALFPEQRSWLHERIAQRFDAMLSEGFIEEVQQLQAKWPIQINLPSMRCVGYRQILEYLAGHYDYETMREKGIAATRQLAKRQLTWLRHWEGALFYDSQNVGFNIDIIAKIREILDNTVSN.

Residue 10–17 participates in ATP binding; the sequence is GPTASGKT. Residue 12 to 17 coordinates substrate; sequence TASGKT. 3 interaction with substrate tRNA regions span residues 35 to 38, 159 to 163, and 240 to 245; these read DSAM, QRIQR, and RCVGYR.

The protein belongs to the IPP transferase family. Monomer. Mg(2+) is required as a cofactor.

It carries out the reaction adenosine(37) in tRNA + dimethylallyl diphosphate = N(6)-dimethylallyladenosine(37) in tRNA + diphosphate. Its function is as follows. Catalyzes the transfer of a dimethylallyl group onto the adenine at position 37 in tRNAs that read codons beginning with uridine, leading to the formation of N6-(dimethylallyl)adenosine (i(6)A). The protein is tRNA dimethylallyltransferase of Legionella pneumophila (strain Paris).